Here is a 340-residue protein sequence, read N- to C-terminus: Inactive hyaluronidase B (340 aa).

2 cysteine pairs are disulfide-bonded: cysteine 21–cysteine 310 and cysteine 187–cysteine 199. Residues asparagine 66 and asparagine 81 are each glycosylated (N-linked (GlcNAc...) asparagine).

This sequence belongs to the glycosyl hydrolase 56 family. In terms of processing, N-glycosylated on at least two Asn residues by identical heptasaccharide units composed of Man, GlcNAc, and Fuc residues in the molar ration of 3:2:2. As to expression, expressed by the venom gland.

The protein resides in the secreted. Has no hyaluronidase activity. This Vespula vulgaris (Yellow jacket) protein is Inactive hyaluronidase B.